Reading from the N-terminus, the 207-residue chain is PITH domain-containing protein P35G2.02 (207 aa).

In terms of domain architecture, PITH spans 13-189 (EHPFESGPND…PVVTIYEATP (177 aa)).

It belongs to the PITHD1 family.

It localises to the cytoplasm. Its subcellular location is the nucleus. In Schizosaccharomyces pombe (strain 972 / ATCC 24843) (Fission yeast), this protein is PITH domain-containing protein P35G2.02.